The chain runs to 86 residues: Cytochrome c oxidase subunit 6B1 (86 aa).

An N-acetylalanine modification is found at A2. The 47-residue stretch at 27-73 folds into the CHCH domain; that stretch reads TRNCWQNYLDFHRCQKAMTAKGGDISVCEWYQRVYQSLCPTSWVTDW. A Cx9C motif motif is present at residues 30–40; it reads CWQNYLDFHRC. Cystine bridges form between C30/C65 and C40/C54. The short motif at 54-65 is the Cx10C motif element; the sequence is CEWYQRVYQSLC.

The protein belongs to the cytochrome c oxidase subunit 6B family. As to quaternary structure, component of the cytochrome c oxidase (complex IV, CIV), a multisubunit enzyme composed of 14 subunits. The complex is composed of a catalytic core of 3 subunits MT-CO1, MT-CO2 and MT-CO3, encoded in the mitochondrial DNA, and 11 supernumerary subunits COX4I, COX5A, COX5B, COX6A, COX6B, COX6C, COX7A, COX7B, COX7C, COX8 and NDUFA4, which are encoded in the nuclear genome. The complex exists as a monomer or a dimer and forms supercomplexes (SCs) in the inner mitochondrial membrane with NADH-ubiquinone oxidoreductase (complex I, CI) and ubiquinol-cytochrome c oxidoreductase (cytochrome b-c1 complex, complex III, CIII), resulting in different assemblies (supercomplex SCI(1)III(2)IV(1) and megacomplex MCI(2)III(2)IV(2)).

The protein localises to the mitochondrion inner membrane. The protein operates within energy metabolism; oxidative phosphorylation. Functionally, component of the cytochrome c oxidase, the last enzyme in the mitochondrial electron transport chain which drives oxidative phosphorylation. The respiratory chain contains 3 multisubunit complexes succinate dehydrogenase (complex II, CII), ubiquinol-cytochrome c oxidoreductase (cytochrome b-c1 complex, complex III, CIII) and cytochrome c oxidase (complex IV, CIV), that cooperate to transfer electrons derived from NADH and succinate to molecular oxygen, creating an electrochemical gradient over the inner membrane that drives transmembrane transport and the ATP synthase. Cytochrome c oxidase is the component of the respiratory chain that catalyzes the reduction of oxygen to water. Electrons originating from reduced cytochrome c in the intermembrane space (IMS) are transferred via the dinuclear copper A center (CU(A)) of subunit 2 and heme A of subunit 1 to the active site in subunit 1, a binuclear center (BNC) formed by heme A3 and copper B (CU(B)). The BNC reduces molecular oxygen to 2 water molecules using 4 electrons from cytochrome c in the IMS and 4 protons from the mitochondrial matrix. This chain is Cytochrome c oxidase subunit 6B1 (COX6B1), found in Pongo abelii (Sumatran orangutan).